The chain runs to 453 residues: Bifunctional protein GlmU (453 aa).

Residues 1–226 (MKFSAVILAA…AIEVEGVNDR (226 aa)) form a pyrophosphorylase region. Residues 8–11 (LAAG), Lys-22, Gln-73, 78–79 (GT), 100–102 (YGD), Gly-137, Glu-151, Asn-166, and Asn-224 each bind UDP-N-acetyl-alpha-D-glucosamine. Asp-102 provides a ligand contact to Mg(2+). Asn-224 serves as a coordination point for Mg(2+). A linker region spans residues 227–247 (AQLARLERAFQSMQAQKLLEQ). Positions 248 to 453 (GVMLRDPARF…TGWQRPVKQK (206 aa)) are N-acetyltransferase. UDP-N-acetyl-alpha-D-glucosamine-binding residues include Arg-330 and Lys-348. The active-site Proton acceptor is His-360. Tyr-363 and Asn-374 together coordinate UDP-N-acetyl-alpha-D-glucosamine. Acetyl-CoA-binding positions include Ala-377, 383-384 (NY), Ser-402, Ala-420, and Arg-437.

The protein in the N-terminal section; belongs to the N-acetylglucosamine-1-phosphate uridyltransferase family. It in the C-terminal section; belongs to the transferase hexapeptide repeat family. In terms of assembly, homotrimer. The cofactor is Mg(2+).

The protein localises to the cytoplasm. It catalyses the reaction alpha-D-glucosamine 1-phosphate + acetyl-CoA = N-acetyl-alpha-D-glucosamine 1-phosphate + CoA + H(+). It carries out the reaction N-acetyl-alpha-D-glucosamine 1-phosphate + UTP + H(+) = UDP-N-acetyl-alpha-D-glucosamine + diphosphate. It functions in the pathway nucleotide-sugar biosynthesis; UDP-N-acetyl-alpha-D-glucosamine biosynthesis; N-acetyl-alpha-D-glucosamine 1-phosphate from alpha-D-glucosamine 6-phosphate (route II): step 2/2. It participates in nucleotide-sugar biosynthesis; UDP-N-acetyl-alpha-D-glucosamine biosynthesis; UDP-N-acetyl-alpha-D-glucosamine from N-acetyl-alpha-D-glucosamine 1-phosphate: step 1/1. Its pathway is bacterial outer membrane biogenesis; LPS lipid A biosynthesis. Its function is as follows. Catalyzes the last two sequential reactions in the de novo biosynthetic pathway for UDP-N-acetylglucosamine (UDP-GlcNAc). The C-terminal domain catalyzes the transfer of acetyl group from acetyl coenzyme A to glucosamine-1-phosphate (GlcN-1-P) to produce N-acetylglucosamine-1-phosphate (GlcNAc-1-P), which is converted into UDP-GlcNAc by the transfer of uridine 5-monophosphate (from uridine 5-triphosphate), a reaction catalyzed by the N-terminal domain. This chain is Bifunctional protein GlmU, found in Vibrio parahaemolyticus serotype O3:K6 (strain RIMD 2210633).